The primary structure comprises 3066 residues: Genome polyprotein (3066 aa).

Residues 168–308 (TSQCRKPTYV…VENMEDIQHY (141 aa)) enclose the Peptidase S30 domain. Active-site for P1 proteinase activity residues include His221, Glu230, and Ser262. The short motif at 361 to 364 (KLSC) is the Involved in interaction with stylet and aphid transmission element. The short motif at 617-619 (PTK) is the Involved in virions binding and aphid transmission element. One can recognise a Peptidase C6 domain in the interval 643–765 (MYIAKEGFCY…QSEMKFYRVG (123 aa)). Catalysis depends on for helper component proteinase activity residues Cys651 and His724. In terms of domain architecture, Helicase ATP-binding spans 1236 to 1388 (LVATSSHTEF…TQHPVKLKVE (153 aa)). 1249 to 1256 (GAVGSGKS) provides a ligand contact to ATP. The DECH box motif lies at 1338 to 1341 (DECH). Residues 1407–1566 (DMIQHGNNLL…GLPVTTQSVS (160 aa)) enclose the Helicase C-terminal domain. A Nuclear localization signal motif is present at residues 1891 to 1900 (KKGKQKGSTR). Position 1915 is an O-(5'-phospho-RNA)-tyrosine (Tyr1915). Residues 2042 to 2260 (SKSVYKGLRD…IAWGSLNLVE (219 aa)) form the Peptidase C4 domain. Active-site for nuclear inclusion protein A activity residues include His2087, Asp2122, and Cys2192. Residues 2526–2650 (WVYCHADGSQ…AVSDKDTWLY (125 aa)) form the RdRp catalytic domain. The tract at residues 2799-2836 (SLQSGKEKEGDMDADKDPKKSTSSSKGAGTSSKDVNVG) is disordered. The segment covering 2803-2818 (GKEKEGDMDADKDPKK) has biased composition (basic and acidic residues). Residues 2819-2831 (STSSSKGAGTSSK) are compositionally biased toward low complexity. Thr3048 is modified (phosphothreonine).

This sequence belongs to the potyviridae genome polyprotein family. Interacts with host eIF4E protein (via cap-binding region); this interaction mediates the translation of the VPg-viral RNA conjugates. Part of a complex that comprises VPg, RNA, host EIF4E and EIF4G; this interaction mediates the translation of the VPg-viral RNA conjugates. In terms of assembly, interacts with host eIF4E proteins in the host cytoplasm. Post-translationally, VPg is uridylylated by the polymerase and is covalently attached to the 5'-end of the genomic RNA. This uridylylated form acts as a nucleotide-peptide primer for the polymerase. In terms of processing, potyviral RNA is expressed as two polyproteins which undergo post-translational proteolytic processing. Genome polyprotein is processed by NIa-pro, P1 and HC-pro proteinases resulting in the production of at least ten individual proteins. P3N-PIPO polyprotein is cleaved by P1 and HC-pro proteinases resulting in the production of three individual proteins. The P1 proteinase and the HC-pro cleave only their respective C-termini autocatalytically. 6K1 is essential for proper proteolytic separation of P3 from CI.

The protein resides in the host cytoplasmic vesicle. It localises to the host cytoplasm. The protein localises to the host nucleus. It is found in the virion. The enzyme catalyses RNA(n) + a ribonucleoside 5'-triphosphate = RNA(n+1) + diphosphate. The catalysed reaction is Hydrolyzes glutaminyl bonds, and activity is further restricted by preferences for the amino acids in P6 - P1' that vary with the species of potyvirus, e.g. Glu-Xaa-Xaa-Tyr-Xaa-Gln-|-(Ser or Gly) for the enzyme from tobacco etch virus. The natural substrate is the viral polyprotein, but other proteins and oligopeptides containing the appropriate consensus sequence are also cleaved.. It carries out the reaction Hydrolyzes a Gly-|-Gly bond at its own C-terminus, commonly in the sequence -Tyr-Xaa-Val-Gly-|-Gly, in the processing of the potyviral polyprotein.. Required for aphid transmission and also has proteolytic activity. Only cleaves a Gly-Gly dipeptide at its own C-terminus. Interacts with virions and aphid stylets. Acts as a suppressor of RNA-mediated gene silencing, also known as post-transcriptional gene silencing (PTGS), a mechanism of plant viral defense that limits the accumulation of viral RNAs. May have RNA-binding activity. Its function is as follows. Has helicase activity. It may be involved in replication. In terms of biological role, indispensable for virus replication. Reduces the abundance of host transcripts related to jasmonic acid biosynthesis therefore altering the host defenses. In order to increase its own stability, decreases host protein degradation pathways. Functionally, indispensable for virus replication. Mediates the cap-independent, EIF4E-dependent translation of viral genomic RNAs. Binds to the cap-binding site of host EIF4E and thus interferes with the host EIF4E-dependent mRNA export and translation. VPg-RNA directly binds EIF4E and is a template for transcription. Also forms trimeric complexes with EIF4E-EIF4G, which are templates for translation. Its function is as follows. Has RNA-binding and proteolytic activities. In terms of biological role, an RNA-dependent RNA polymerase that plays an essential role in the virus replication. Functionally, involved in aphid transmission, cell-to-cell and systemis movement, encapsidation of the viral RNA and in the regulation of viral RNA amplification. This chain is Genome polyprotein, found in Glycine max (Soybean).